A 341-amino-acid polypeptide reads, in one-letter code: Retinol dehydrogenase 10 (341 aa).

Residues I3–A23 form a helical; Signal-anchor membrane-spanning segment. L40–V64 serves as a coordination point for NADP(+). A substrate-binding site is contributed by S197. Catalysis depends on Y210, which acts as the Proton acceptor.

This sequence belongs to the short-chain dehydrogenases/reductases (SDR) family. In terms of tissue distribution, detected in retinal pigment epithelium (at protein level). Detected in retina, retinal pigment epithelium, and at lower levels in cornea, liver, kidney, pancreas, lung, brain and skeletal muscle.

It localises to the microsome membrane. The protein resides in the endoplasmic reticulum membrane. The catalysed reaction is all-trans-retinol + NADP(+) = all-trans-retinal + NADPH + H(+). The protein operates within cofactor metabolism; retinol metabolism. Retinol dehydrogenase with a clear preference for NADP. Converts all-trans-retinol to all-trans-retinal. Has no detectable activity towards 11-cis-retinol, 9-cis-retinol and 13-cis-retinol. This Bos taurus (Bovine) protein is Retinol dehydrogenase 10 (RDH10).